The primary structure comprises 297 residues: Vacuolar protein sorting-associated protein 26C (297 aa).

The protein belongs to the VPS26 family. Component of the commander complex that is essential for endosomal recycling of transmembrane cargos; the commander complex is composed of the CCC subcomplex and the retriever subcomplex. Component of the heterotrimeric retriever complex consisting of VPS26C, VPS29 and VPS35L; within the complex interacts with VPS35L. Interacts with SNX17 (via C-terminus); the interaction is direct and associates SNX17 with the retriever complex. Interacts with SNX31; the interaction is direct.

The protein localises to the endosome. In terms of biological role, component of the commander complex that is essential for endosomal recycling of transmembrane cargos; the commander complex is composed of the CCC subcomplex and the retriever subcomplex. Component of the retriever complex, which is a heterotrimeric complex related to retromer cargo-selective complex (CSC) and essential for retromer-independent retrieval and recycling of numerous cargos such as integrin alpha-5/beta-1 (ITGA5:ITGB1). The recruitment of the retriever complex to the endosomal membrane involves CCC and WASH complexes. In the endosomes, drives the retriever and recycling of NxxY-motif-containing cargo proteins by coupling to SNX17, a cargo essential for the homeostatic maintenance of numerous cell surface proteins associated with processes that include cell migration, cell adhesion, nutrient supply and cell signaling. The polypeptide is Vacuolar protein sorting-associated protein 26C (Mus musculus (Mouse)).